Here is a 37-residue protein sequence, read N- to C-terminus: Bacteriocin lactococcin MMFII (37 aa).

Cys9 and Cys14 are disulfide-bonded.

The protein resides in the secreted. Functionally, bacteriocin active against Listeria monocytogenes and Lactococcus cremoris. The chain is Bacteriocin lactococcin MMFII from Lactococcus lactis subsp. lactis (Streptococcus lactis).